Consider the following 325-residue polypeptide: MIVLGIETSCDETAVAVLENEKILSSVVSSQIDVHKKFGGVVPEIAARHHLSNLPVVFKNALSQAKISLNDIDLISVTYGPGLIGALLVGISFAKGLSLKLNKPLIGINHIVGHVYANYLTYPNLKPPFIVLMVSGGHTEILHIQNEKIEVLGKTLDDAAGEAFDKVARILGLGYPGGPEIEKIAQYGNDKAFNFPKPLYDSKDYNFSFSGLKTAVLYTIKKLDKIPKEDVAASFQRAVTDILLHKTFKAAKDKKINTVVLAGGVAANKYLRTKALEISKKEGIILLIPPIEFCTDNAAMIAIAGYKLFDGTSDLNIDAMPNLNL.

H110 and H114 together coordinate Fe cation. Substrate contacts are provided by residues 133–137, D165, G178, and N268; that span reads MVSGG. D296 serves as a coordination point for Fe cation.

This sequence belongs to the KAE1 / TsaD family. Fe(2+) serves as cofactor.

It is found in the cytoplasm. The catalysed reaction is L-threonylcarbamoyladenylate + adenosine(37) in tRNA = N(6)-L-threonylcarbamoyladenosine(37) in tRNA + AMP + H(+). Required for the formation of a threonylcarbamoyl group on adenosine at position 37 (t(6)A37) in tRNAs that read codons beginning with adenine. Is involved in the transfer of the threonylcarbamoyl moiety of threonylcarbamoyl-AMP (TC-AMP) to the N6 group of A37, together with TsaE and TsaB. TsaD likely plays a direct catalytic role in this reaction. This chain is tRNA N6-adenosine threonylcarbamoyltransferase, found in Thermosipho melanesiensis (strain DSM 12029 / CIP 104789 / BI429).